We begin with the raw amino-acid sequence, 223 residues long: Ribonuclease 3 (223 aa).

An RNase III domain is found at 4–127 (LEEFERNLGY…VMGAIYLEAG (124 aa)). E40 is a binding site for Mg(2+). D44 is an active-site residue. Mg(2+) contacts are provided by D113 and E116. E116 is a catalytic residue. One can recognise a DRBM domain in the interval 154–223 (DYKTALQEVT…AKIALEKIKK (70 aa)).

This sequence belongs to the ribonuclease III family. As to quaternary structure, homodimer. Mg(2+) serves as cofactor.

It is found in the cytoplasm. The catalysed reaction is Endonucleolytic cleavage to 5'-phosphomonoester.. Digests double-stranded RNA. Involved in the processing of primary rRNA transcript to yield the immediate precursors to the large and small rRNAs (23S and 16S). Processes some mRNAs, and tRNAs when they are encoded in the rRNA operon. Processes pre-crRNA and tracrRNA of type II CRISPR loci if present in the organism. The protein is Ribonuclease 3 of Campylobacter concisus (strain 13826).